Reading from the N-terminus, the 344-residue chain is TATA box-binding protein-like 2 (344 aa).

The segment at 78–143 (NKDRTVTGNK…SNQLSSETPN (66 aa)) is disordered. Residues 110–120 (GSGLNLNSNSS) show a composition bias toward low complexity. Positions 134–143 (SNQLSSETPN) are enriched in polar residues.

It belongs to the TBP family. Interacts with TAF3.

The protein localises to the cytoplasm. Its subcellular location is the nucleus. Its function is as follows. Transcription factor required in complex with TAF3 for the differentiation of myoblasts into myocytes. The complex replaces TFIID at specific promoters at an early stage in the differentiation process. This is TATA box-binding protein-like 2 from Rattus norvegicus (Rat).